A 141-amino-acid chain; its full sequence is Large-conductance mechanosensitive channel (141 aa).

The next 2 membrane-spanning stretches (helical) occupy residues 16-36 (VIDL…VDSL) and 86-106 (GNFI…FLMV).

It belongs to the MscL family. In terms of assembly, homopentamer.

It is found in the cell inner membrane. Functionally, channel that opens in response to stretch forces in the membrane lipid bilayer. May participate in the regulation of osmotic pressure changes within the cell. The protein is Large-conductance mechanosensitive channel of Ralstonia nicotianae (strain ATCC BAA-1114 / GMI1000) (Ralstonia solanacearum).